The sequence spans 270 residues: 4-hydroxy-tetrahydrodipicolinate reductase (270 aa).

Residue 7–12 (GANGRM) participates in NAD(+) binding. Arg-34 contributes to the NADP(+) binding site. Residues 97–99 (GTT) and 121–124 (SGNM) contribute to the NAD(+) site. His-155 acts as the Proton donor/acceptor in catalysis. (S)-2,3,4,5-tetrahydrodipicolinate is bound at residue His-156. Catalysis depends on Lys-159, which acts as the Proton donor. 165 to 166 (GT) is a (S)-2,3,4,5-tetrahydrodipicolinate binding site.

This sequence belongs to the DapB family.

The protein localises to the cytoplasm. The catalysed reaction is (S)-2,3,4,5-tetrahydrodipicolinate + NAD(+) + H2O = (2S,4S)-4-hydroxy-2,3,4,5-tetrahydrodipicolinate + NADH + H(+). It carries out the reaction (S)-2,3,4,5-tetrahydrodipicolinate + NADP(+) + H2O = (2S,4S)-4-hydroxy-2,3,4,5-tetrahydrodipicolinate + NADPH + H(+). It participates in amino-acid biosynthesis; L-lysine biosynthesis via DAP pathway; (S)-tetrahydrodipicolinate from L-aspartate: step 4/4. Its function is as follows. Catalyzes the conversion of 4-hydroxy-tetrahydrodipicolinate (HTPA) to tetrahydrodipicolinate. In Bartonella tribocorum (strain CIP 105476 / IBS 506), this protein is 4-hydroxy-tetrahydrodipicolinate reductase.